The following is a 201-amino-acid chain: Probable chemoreceptor glutamine deamidase CheD 1 (201 aa).

Belongs to the CheD family.

It catalyses the reaction L-glutaminyl-[protein] + H2O = L-glutamyl-[protein] + NH4(+). Functionally, probably deamidates glutamine residues to glutamate on methyl-accepting chemotaxis receptors (MCPs), playing an important role in chemotaxis. The protein is Probable chemoreceptor glutamine deamidase CheD 1 of Dechloromonas aromatica (strain RCB).